The primary structure comprises 69 residues: Amphipathic peptide CT2 (69 aa).

The N-terminal stretch at 1–23 is a signal peptide; the sequence is MKTQFVILIVAVVLLQLIANSEA. F36 is modified (phenylalanine amide). Positions 40–69 are excised as a propeptide; the sequence is GLRNLDNLDDDIFEPEMSEADLRYLQDLLR.

Belongs to the non-disulfide-bridged peptide (NDBP) superfamily. Short antimicrobial peptide (group 4) family. In terms of tissue distribution, expressed by the venom gland.

Its subcellular location is the secreted. It localises to the target cell membrane. Amphipathic peptide that shows antibacterial activities against both Gram-positive (MIC=10 uM, 20 uM and 20 uM against S.aureus, B.subtilis and S.agalactiae, respectively) and Gram-negative bacteria (MIC=20 uM, 10 uM, and 10 uM against E.coli, S.typhi, and P.aeruginosa, respectively). Is mildly hemolytic at its MIC range, but shows a strong cytotoxic activity at higher concentrations, reaching 84% lysis at 50 uM. This chain is Amphipathic peptide CT2, found in Vaejovis mexicanus smithi (Mexican scorpion).